A 408-amino-acid polypeptide reads, in one-letter code: Multidrug resistance protein MdtG (408 aa).

The next 11 membrane-spanning stretches (helical) occupy residues L16 to F36, I58 to A78, L92 to I112, A115 to V135, T146 to A166, P173 to I193, L224 to L244, V253 to L273, I290 to T310, F319 to N339, and A378 to L398.

The protein belongs to the major facilitator superfamily. DHA1 family. MdtG (TC 2.A.1.2.20) subfamily.

The protein localises to the cell inner membrane. Its function is as follows. Confers resistance to fosfomycin and deoxycholate. The polypeptide is Multidrug resistance protein MdtG (Escherichia fergusonii (strain ATCC 35469 / DSM 13698 / CCUG 18766 / IAM 14443 / JCM 21226 / LMG 7866 / NBRC 102419 / NCTC 12128 / CDC 0568-73)).